Here is a 422-residue protein sequence, read N- to C-terminus: MLKEEDKIFTNLHGQQSHDLKSSKKRGDWDNTKALLDKGREFIIEEVKKSGLRGRGGAGFSTGMKWSFMPKNSAKPCYLVVNADESEPGTCKDRDILRFEPHKLIEGCLLASFAIGANDCYIYIRGEFYNEASNIQRALDEAYKDGLIGKNACGSGFDCNIYLHRGAGAYICGEETALLESLEGKKGMPRLKPPFPAGFGLYGCPTTINNVESIAVVPTILRRGASWFASIGKPNNTGTKIFCISGHVNKPCNVEEAMGISLKELIEKYAGGVRGGWDNLKAIIPGGSSVPLLPKSLCEVDMDFDSLRTAGSGLGTGGIIVMDKSTDIIYAIARLSKFYMHESCGQCTPCREGTGWMWRVMMRLVKGNAQKSEIDELLNVTKEIEGHTICALGDAAAWPIQGLIRHFRSEIEERIKGWSSAI.

Residues 1 to 26 form a disordered region; that stretch reads MLKEEDKIFTNLHGQQSHDLKSSKKR. A compositionally biased stretch (basic and acidic residues) spans 16-26; it reads QSHDLKSSKKR. Residue 54–63 coordinates NAD(+); the sequence is GRGGAGFSTG. 166–213 lines the FMN pocket; that stretch reads GAGAYICGEETALLESLEGKKGMPRLKPPFPAGFGLYGCPTTINNVES. [4Fe-4S] cluster is bound by residues C344, C347, C350, and C390.

It belongs to the complex I 51 kDa subunit family. FMN is required as a cofactor. Requires [4Fe-4S] cluster as cofactor.

The catalysed reaction is a quinone + NADH + 5 H(+)(in) = a quinol + NAD(+) + 4 H(+)(out). Functionally, NDH-1 shuttles electrons from NADH, via FMN and iron-sulfur (Fe-S) centers, to quinones in the respiratory chain. Couples the redox reaction to proton translocation (for every two electrons transferred, four hydrogen ions are translocated across the cytoplasmic membrane), and thus conserves the redox energy in a proton gradient. This is NADH-quinone oxidoreductase subunit F (nuoF) from Rickettsia felis (strain ATCC VR-1525 / URRWXCal2) (Rickettsia azadi).